Consider the following 480-residue polypeptide: MTLSFTARWRDELPATYTALLPTPLKNARLIWYNDKLAQQLAIPASLFDATNGAGVWGGETLLPGMSPVAQVYSGHQFGVWAGQLGDGRGILLGEQLLADGSTLDWHLKGAGLTPYSRMGDGRAVLRSTIRESLASEAMHYLGIPTTRALSIVASDTPVQRETQETGAMLMRLAQSHMRFGHFEHFYYRREPEKVQQLADFAIRHYWPQWQDVPEKYALWFEEVAARTGRLIAEWQTVGFSHGVMNTDNMSILGLTIDYGPFGFFDDYDPGFIGNHSDHQGRYRFDNQPSVALWNLQRLAQTLTPFIEIDALNRALDRYQDALLTHYGQRMRQKLGFFTEQKDDNALLNELFSLMAREGSDYTRTFRMLSHTEQQSASSPLRDTFIDRAAFDAWFDRYRARLRTEAVDDALRQQQMQRVNPAIVLRNWLAQRAIDAAEQGDMAELHRLHEVLRQPFTDRDDDYASRPPEWGKRLEVSCSS.

Residues G86, G88, R89, K109, D121, G122, R172, and R179 each contribute to the ATP site. D248 acts as the Proton acceptor in catalysis. Mg(2+) is bound by residues N249 and D258. ATP is bound at residue D258.

The protein belongs to the SELO family. It depends on Mg(2+) as a cofactor. Mn(2+) is required as a cofactor.

It catalyses the reaction L-seryl-[protein] + ATP = 3-O-(5'-adenylyl)-L-seryl-[protein] + diphosphate. It carries out the reaction L-threonyl-[protein] + ATP = 3-O-(5'-adenylyl)-L-threonyl-[protein] + diphosphate. The catalysed reaction is L-tyrosyl-[protein] + ATP = O-(5'-adenylyl)-L-tyrosyl-[protein] + diphosphate. The enzyme catalyses L-histidyl-[protein] + UTP = N(tele)-(5'-uridylyl)-L-histidyl-[protein] + diphosphate. It catalyses the reaction L-seryl-[protein] + UTP = O-(5'-uridylyl)-L-seryl-[protein] + diphosphate. It carries out the reaction L-tyrosyl-[protein] + UTP = O-(5'-uridylyl)-L-tyrosyl-[protein] + diphosphate. Functionally, nucleotidyltransferase involved in the post-translational modification of proteins. It can catalyze the addition of adenosine monophosphate (AMP) or uridine monophosphate (UMP) to a protein, resulting in modifications known as AMPylation and UMPylation. This Salmonella heidelberg (strain SL476) protein is Protein nucleotidyltransferase YdiU.